We begin with the raw amino-acid sequence, 232 residues long: T-cell surface glycoprotein CD1b-3 (232 aa).

At 1–201 (GLQEFQFEYP…LYWGHPMYIG (201 aa)) the chain is on the extracellular side. 3 disulfide bridges follow: Cys19-Cys83, Cys48-Cys62, and Cys123-Cys178. Asn45 carries an N-linked (GlcNAc...) asparagine glycan. In terms of domain architecture, Ig-like spans 84–194 (PRYLLGVLDA…LGDQDIILYW (111 aa)). Residues 202–222 (LIFVAIIVPSLILLICLALWF) traverse the membrane as a helical segment. Over 223-232 (WRRWSYQTVL) the chain is Cytoplasmic.

As to quaternary structure, heterodimer with B2M (beta-2-microglobulin). Interacts with saposin C.

Its subcellular location is the cell membrane. It localises to the endosome membrane. The protein localises to the lysosome membrane. Its function is as follows. Antigen-presenting protein that binds self and non-self lipid and glycolipid antigens and presents them to T-cell receptors on natural killer T-cells. The chain is T-cell surface glycoprotein CD1b-3 from Ovis aries (Sheep).